The sequence spans 248 residues: 2,3-bisphosphoglycerate-dependent phosphoglycerate mutase (248 aa).

Substrate contacts are provided by residues 8 to 15 (RHGESTWN), 21 to 22 (TG), arginine 60, 87 to 90 (ERHY), lysine 98, 114 to 115 (RR), and 183 to 184 (GN). Residue histidine 9 is the Tele-phosphohistidine intermediate of the active site. Glutamate 87 (proton donor/acceptor) is an active-site residue.

The protein belongs to the phosphoglycerate mutase family. BPG-dependent PGAM subfamily.

The enzyme catalyses (2R)-2-phosphoglycerate = (2R)-3-phosphoglycerate. Its pathway is carbohydrate degradation; glycolysis; pyruvate from D-glyceraldehyde 3-phosphate: step 3/5. Catalyzes the interconversion of 2-phosphoglycerate and 3-phosphoglycerate. The sequence is that of 2,3-bisphosphoglycerate-dependent phosphoglycerate mutase from Solibacter usitatus (strain Ellin6076).